The following is a 141-amino-acid chain: Transcriptional regulator MraZ (141 aa).

SpoVT-AbrB domains lie at 5-47 (TFNL…KPAD) and 76-119 (ANLV…DKVQ).

This sequence belongs to the MraZ family. As to quaternary structure, forms oligomers.

It localises to the cytoplasm. It is found in the nucleoid. The polypeptide is Transcriptional regulator MraZ (Mycoplasma genitalium (strain ATCC 33530 / DSM 19775 / NCTC 10195 / G37) (Mycoplasmoides genitalium)).